The chain runs to 350 residues: Chemokine C-C motif receptor-like 2 (350 aa).

Topologically, residues 1 to 43 are extracellular; it reads MANYTSAPEDDYDVFIEDDLSNDERELCSPYDPQALLAQLVPY. N3 carries N-linked (GlcNAc...) asparagine glycosylation. A helical membrane pass occupies residues 44–64; it reads LFITVFLVGLLDNILVVLIMV. Residues 65 to 74 are Cytoplasmic-facing; sequence KYKGLKQVEN. Residues 75–95 form a helical membrane-spanning segment; sequence IYLLNLAVCNLCFLCTLPFWV. At 96-110 the chain is on the extracellular side; sequence HMAWHEGDPGEPLCK. An intrachain disulfide couples C109 to C187. Residues 111–131 form a helical membrane-spanning segment; that stretch reads ILLVLYSVGLFSEAFFNVLLT. The Cytoplasmic portion of the chain corresponds to 132–149; sequence VQRYQKFFQMRGFFSATR. The helical transmembrane segment at 150 to 170 threads the bilayer; the sequence is MVAGSIFPSALVWVIAVLVML. Over 171–204 the chain is Extracellular; it reads PELAFYKPQMENQKYKCFFGRPLFLPADETFWKH. A helical transmembrane segment spans residues 205–225; sequence FLTLKMNILGFLLPLFVFVFC. The Cytoplasmic portion of the chain corresponds to 226–244; the sequence is YVRMRRTLKFGERGYDLFK. The chain crosses the membrane as a helical span at residues 245–265; it reads LVFTIMVVFLLMWGPYNIALF. Residues 266-288 lie on the Extracellular side of the membrane; that stretch reads LSAFNEHFSLHGCESSHNLDRST. The helical transmembrane segment at 289–309 threads the bilayer; the sequence is LITKIIATTHCCVNPLLYVFF. The Cytoplasmic portion of the chain corresponds to 310–350; it reads DEAFRKHLYHFCHLCNDTAPQPTEEPAQGTSREEPCLSTKM. The interval 329 to 350 is disordered; sequence PQPTEEPAQGTSREEPCLSTKM.

This sequence belongs to the G-protein coupled receptor 1 family.

It is found in the cell membrane. Its function is as follows. Receptor for CCL19 and chemerin/RARRES2. Does not appear to be a signaling receptor, but may have a role in modulating chemokine-triggered immune responses by capturing and internalizing CCL19 or by presenting RARRES2 ligand to CMKLR1, a functional signaling receptor. Plays a critical role for the development of Th2 responses. This is Chemokine C-C motif receptor-like 2 (CCRL2) from Sus scrofa (Pig).